The following is a 204-amino-acid chain: Guanylate kinase (204 aa).

Residues 6-184 form the Guanylate kinase-like domain; that stretch reads GLLIVLSGPA…AVDRIKAIVT (179 aa). 13 to 20 serves as a coordination point for ATP; the sequence is GPAGVGKG.

This sequence belongs to the guanylate kinase family.

The protein resides in the cytoplasm. The enzyme catalyses GMP + ATP = GDP + ADP. Functionally, essential for recycling GMP and indirectly, cGMP. The protein is Guanylate kinase (gmk) of Halalkalibacterium halodurans (strain ATCC BAA-125 / DSM 18197 / FERM 7344 / JCM 9153 / C-125) (Bacillus halodurans).